The chain runs to 364 residues: D-alanine--D-alanine ligase (364 aa).

The ATP-grasp domain maps to 134–347 (RRLACINGLK…YPDLLDELIN (214 aa)). 167–222 (ASEFGWPLFVKPCSLGSSVGIHKANNMDELNAAVADALRYDEEILVEEFIVGREIE) is an ATP binding site. The Mg(2+) site is built by Asp300, Glu314, and Asn316.

Belongs to the D-alanine--D-alanine ligase family. It depends on Mg(2+) as a cofactor. Mn(2+) is required as a cofactor.

The protein resides in the cytoplasm. It carries out the reaction 2 D-alanine + ATP = D-alanyl-D-alanine + ADP + phosphate + H(+). It functions in the pathway cell wall biogenesis; peptidoglycan biosynthesis. Its function is as follows. Cell wall formation. This chain is D-alanine--D-alanine ligase, found in Legionella pneumophila (strain Lens).